We begin with the raw amino-acid sequence, 87 residues long: Small ribosomal subunit protein uS17 (87 aa).

This sequence belongs to the universal ribosomal protein uS17 family. In terms of assembly, part of the 30S ribosomal subunit.

Its function is as follows. One of the primary rRNA binding proteins, it binds specifically to the 5'-end of 16S ribosomal RNA. The sequence is that of Small ribosomal subunit protein uS17 from Dichelobacter nodosus (strain VCS1703A).